The sequence spans 660 residues: Acetyl-coenzyme A synthetase (660 aa).

Residues arginine 197–lysine 200 and threonine 317 each bind CoA. Residues glycine 397 to proline 399, aspartate 421 to threonine 426, aspartate 512, and arginine 528 contribute to the ATP site. Serine 536 contacts CoA. Residue arginine 539 coordinates ATP. Residues valine 550 and valine 555 each coordinate Mg(2+). Lysine 625 bears the N6-acetyllysine mark.

It belongs to the ATP-dependent AMP-binding enzyme family. Mg(2+) is required as a cofactor. In terms of processing, acetylated. Deacetylation by the SIR2-homolog deacetylase activates the enzyme.

It catalyses the reaction acetate + ATP + CoA = acetyl-CoA + AMP + diphosphate. Functionally, catalyzes the conversion of acetate into acetyl-CoA (AcCoA), an essential intermediate at the junction of anabolic and catabolic pathways. AcsA undergoes a two-step reaction. In the first half reaction, AcsA combines acetate with ATP to form acetyl-adenylate (AcAMP) intermediate. In the second half reaction, it can then transfer the acetyl group from AcAMP to the sulfhydryl group of CoA, forming the product AcCoA. The sequence is that of Acetyl-coenzyme A synthetase from Cupriavidus taiwanensis (strain DSM 17343 / BCRC 17206 / CCUG 44338 / CIP 107171 / LMG 19424 / R1) (Ralstonia taiwanensis (strain LMG 19424)).